A 138-amino-acid chain; its full sequence is Large ribosomal subunit protein uL16 (138 aa).

Residues 1–17 (MLIPRKVKHRKQHHPRQ) show a composition bias toward basic residues. Positions 1–23 (MLIPRKVKHRKQHHPRQRGIASG) are disordered.

This sequence belongs to the universal ribosomal protein uL16 family. Part of the 50S ribosomal subunit.

Functionally, binds 23S rRNA and is also seen to make contacts with the A and possibly P site tRNAs. The chain is Large ribosomal subunit protein uL16 from Mycobacterium sp. (strain JLS).